A 518-amino-acid chain; its full sequence is MSEALTEQKSQKWAISLFTIGVFMAALDNGIISAALTTINESFSVSPSWGSWGITLYTLGLSVSVPIVGKLSDRYGRKKLFLIEVCLFGLGSLLVALSQSFPLFLISRLIQALGGGGIFIIGSSHILATLPKEKQGKALGLLGAMNGMAAVLGPNIGSFLLDWTGSWHWLFLINLPIAVLLVVFGACFIAETKAPEAKRLDAAGIFLLSLSILAVMYGMTNLDGANLLHSLGNPEVYGCIIFGILCFAALISYEKRVEMRGGDPILAYSLLRNHMFQRTLIIGLLSGGLLAAVIFIPSYVEQYLGVPAAKAGYWMTPLALASGIGAWLGGALTDKKGPVKTVILSGIISCAGFALFPLWVTEKWEFVIASVAAGIGFGFLLGAPLNVLVSEAAKTNKGTALGTLSLVRQIGLTLAPTLYAGFITAGFDQIGDEINSRLSDSGYSEKAMQMIPEIDSSEVSSLQEQIERIPVPEVKTAISDAIHASVASGYDHLYAAAAVVSLLVIAAISIPAFRRQKR.

The next 14 helical transmembrane spans lie at 13–33, 49–69, 86–106, 109–129, 141–161, 169–189, 202–222, 231–251, 280–300, 312–332, 341–361, 365–385, 410–430, and 493–513; these read WAISLFTIGVFMAALDNGIIS, WGSWGITLYTLGLSVSVPIVG, CLFGLGSLLVALSQSFPLFLI, LIQALGGGGIFIIGSSHILAT, LLGAMNGMAAVLGPNIGSFLL, WLFLINLPIAVLLVVFGACFI, AAGIFLLSLSILAVMYGMTNL, LGNPEVYGCIIFGILCFAALI, LIIGLLSGGLLAAVIFIPSYV, GYWMTPLALASGIGAWLGGAL, TVILSGIISCAGFALFPLWVT, EFVIASVAAGIGFGFLLGAPL, IGLTLAPTLYAGFITAGFDQI, and LYAAAAVVSLLVIAAISIPAF.

The protein belongs to the major facilitator superfamily. TCR/Tet family.

It localises to the cell membrane. This is an uncharacterized protein from Bacillus subtilis (strain 168).